Reading from the N-terminus, the 139-residue chain is GPI-anchored protein 53 (139 aa).

The signal sequence occupies residues methionine 1–alanine 17. Low complexity-rich tracts occupy residues threonine 57–threonine 69 and threonine 77–serine 101. Positions threonine 57 to threonine 115 are disordered. Asparagine 93 carries N-linked (GlcNAc...) asparagine glycosylation. Residue glycine 116 is the site of GPI-anchor amidated glycine attachment. A propeptide spans glycine 117–leucine 139 (removed in mature form).

It localises to the cell membrane. The chain is GPI-anchored protein 53 (PGA53) from Candida albicans (strain SC5314 / ATCC MYA-2876) (Yeast).